A 152-amino-acid polypeptide reads, in one-letter code: Ribosome maturation factor RimP (152 aa).

The protein belongs to the RimP family.

The protein localises to the cytoplasm. Functionally, required for maturation of 30S ribosomal subunits. This is Ribosome maturation factor RimP from Stutzerimonas stutzeri (strain A1501) (Pseudomonas stutzeri).